Reading from the N-terminus, the 97-residue chain is Large ribosomal subunit protein bL27 (97 aa).

A propeptide spanning residues M1–F12 is cleaved from the precursor. The disordered stretch occupies residues H14–D38.

The protein belongs to the bacterial ribosomal protein bL27 family. In terms of processing, the N-terminus is cleaved by ribosomal processing cysteine protease Prp.

This Streptococcus mutans serotype c (strain ATCC 700610 / UA159) protein is Large ribosomal subunit protein bL27.